A 305-amino-acid polypeptide reads, in one-letter code: UDP-3-O-acyl-N-acetylglucosamine deacetylase (305 aa).

3 residues coordinate Zn(2+): H79, H238, and D242. The Proton donor role is filled by H265.

Belongs to the LpxC family. The cofactor is Zn(2+).

It carries out the reaction a UDP-3-O-[(3R)-3-hydroxyacyl]-N-acetyl-alpha-D-glucosamine + H2O = a UDP-3-O-[(3R)-3-hydroxyacyl]-alpha-D-glucosamine + acetate. Its pathway is glycolipid biosynthesis; lipid IV(A) biosynthesis; lipid IV(A) from (3R)-3-hydroxytetradecanoyl-[acyl-carrier-protein] and UDP-N-acetyl-alpha-D-glucosamine: step 2/6. Its function is as follows. Catalyzes the hydrolysis of UDP-3-O-myristoyl-N-acetylglucosamine to form UDP-3-O-myristoylglucosamine and acetate, the committed step in lipid A biosynthesis. This chain is UDP-3-O-acyl-N-acetylglucosamine deacetylase, found in Klebsiella pneumoniae subsp. pneumoniae (strain ATCC 700721 / MGH 78578).